The primary structure comprises 463 residues: Sialic acid-binding Ig-like lectin 9 (463 aa).

An N-terminal signal peptide occupies residues 1–17 (MLLLLLPLLWGRERAEG). At 18–348 (QTSKLLTMQS…SKATSGVTQG (331 aa)) the chain is on the extracellular side. One can recognise an Ig-like V-type domain in the interval 20–140 (SKLLTMQSSV…KHHRLSVNVT (121 aa)). 3 disulfides stabilise this stretch: Cys36–Cys170, Cys41–Cys102, and Cys164–Cys213. A glycan (N-linked (GlcNAc...) asparagine) is linked at Asn101. Arg120 serves as a coordination point for N-acetylneuraminate. N-linked (GlcNAc...) asparagine glycosylation is found at Asn138 and Asn161. An Ig-like C2-type 1 domain is found at 146 to 229 (PNILIPGTLE…ASVTTNKTVH (84 aa)). Asn225, Asn231, Asn238, and Asn256 each carry an N-linked (GlcNAc...) asparagine glycan. Residues 236–336 (PQNLTMTVFQ…GSQQVYLNVS (101 aa)) enclose the Ig-like C2-type 2 domain. The cysteines at positions 272 and 320 are disulfide-linked. Asn334 is a glycosylation site (N-linked (GlcNAc...) asparagine). Residues 349–369 (VVGGAGATALVFLSFCVIFVV) traverse the membrane as a helical segment. Residues 370–463 (VRSCRKKSAR…TEYSEIKIHR (94 aa)) lie on the Cytoplasmic side of the membrane. Residues 380-428 (PAAGVGDTGIEDANAVRGSASQGPLTEPWAEDSPPDQPPPASARSSVGE) are disordered. Residues 431 to 436 (LQYASL) carry the ITIM motif motif. Residues 444–463 (WDSRGQEATDTEYSEIKIHR) are disordered. The SLAM-like motif signature appears at 454–459 (TEYSEI).

This sequence belongs to the immunoglobulin superfamily. SIGLEC (sialic acid binding Ig-like lectin) family. As to expression, expressed by peripheral blood leukocytes (neutrophils and monocytes but not eosinophils). Found in liver, fetal liver, bone marrow, placenta, spleen and in lower levels in skeletal muscle, fetal brain, stomach, lung, thymus, prostate, brain, mammary, adrenal gland, colon, trachea, cerebellum, testis, small intestine and spinal cordon.

It localises to the membrane. In terms of biological role, putative adhesion molecule that mediates sialic-acid dependent binding to cells. Preferentially binds to alpha-2,3- or alpha-2,6-linked sialic acid. The sialic acid recognition site may be masked by cis interactions with sialic acids on the same cell surface. The polypeptide is Sialic acid-binding Ig-like lectin 9 (SIGLEC9) (Homo sapiens (Human)).